The following is a 122-amino-acid chain: Small ribosomal subunit protein uS13 (122 aa).

The interval 96–122 (LPCRGQRTHTNARTRKGPRKPIAGKKK) is disordered.

Belongs to the universal ribosomal protein uS13 family. Part of the 30S ribosomal subunit. Forms a loose heterodimer with protein S19. Forms two bridges to the 50S subunit in the 70S ribosome.

Its function is as follows. Located at the top of the head of the 30S subunit, it contacts several helices of the 16S rRNA. In the 70S ribosome it contacts the 23S rRNA (bridge B1a) and protein L5 of the 50S subunit (bridge B1b), connecting the 2 subunits; these bridges are implicated in subunit movement. Contacts the tRNAs in the A and P-sites. The protein is Small ribosomal subunit protein uS13 of Magnetococcus marinus (strain ATCC BAA-1437 / JCM 17883 / MC-1).